The chain runs to 207 residues: Interleukin-6 (207 aa).

The N-terminal stretch at 1-20 (MNSLSTSAFSLGLLLVMATA) is a signal peptide. An intrachain disulfide couples cysteine 67 to cysteine 73. Serine 76 carries the phosphoserine modification. Cysteine 96 and cysteine 106 are joined by a disulfide.

This sequence belongs to the IL-6 superfamily. In terms of assembly, component of a hexamer of two molecules each of IL6, IL6R and IL6ST; first binds to IL6R to associate with the signaling subunit IL6ST. Interacts with IL6R (via the N-terminal ectodomain); this interaction may be affected by IL6R-binding with SORL1, hence decreasing IL6 cis signaling. Interacts with SORL1 (via the N-terminal ectodomain); this interaction leads to IL6 internalization and lysosomal degradation. May form a trimeric complex with the soluble SORL1 ectodomain and soluble IL6R receptor; this interaction might stabilize circulating IL6, hence promoting IL6 trans signaling.

Its subcellular location is the secreted. Functionally, cytokine with a wide variety of biological functions in immunity, tissue regeneration, and metabolism. Binds to IL6R, then the complex associates to the signaling subunit IL6ST/gp130 to trigger the intracellular IL6-signaling pathway. The interaction with the membrane-bound IL6R and IL6ST stimulates 'classic signaling', whereas the binding of IL6 and soluble IL6R to IL6ST stimulates 'trans-signaling'. Alternatively, 'cluster signaling' occurs when membrane-bound IL6:IL6R complexes on transmitter cells activate IL6ST receptors on neighboring receiver cells. In terms of biological role, IL6 is a potent inducer of the acute phase response. Rapid production of IL6 contributes to host defense during infection and tissue injury, but excessive IL6 synthesis is involved in disease pathology. In the innate immune response, is synthesized by myeloid cells, such as macrophages and dendritic cells, upon recognition of pathogens through toll-like receptors (TLRs) at the site of infection or tissue injury. In the adaptive immune response, is required for the differentiation of B cells into immunoglobulin-secreting cells. Plays a major role in the differentiation of CD4(+) T cell subsets. Essential factor for the development of T follicular helper (Tfh) cells that are required for the induction of germinal-center formation. Required to drive naive CD4(+) T cells to the Th17 lineage. Also required for proliferation of myeloma cells and the survival of plasmablast cells. Acts as an essential factor in bone homeostasis and on vessels directly or indirectly by induction of VEGF, resulting in increased angiogenesis activity and vascular permeability. Induces, through 'trans-signaling' and synergistically with IL1B and TNF, the production of VEGF. Involved in metabolic controls, is discharged into the bloodstream after muscle contraction increasing lipolysis and improving insulin resistance. 'Trans-signaling' in central nervous system also regulates energy and glucose homeostasis. Mediates, through GLP-1, crosstalk between insulin-sensitive tissues, intestinal L cells and pancreatic islets to adapt to changes in insulin demand. Also acts as a myokine. Plays a protective role during liver injury, being required for maintenance of tissue regeneration. Also has a pivotal role in iron metabolism by regulating HAMP/hepcidin expression upon inflammation or bacterial infection. Through activation of IL6ST-YAP-NOTCH pathway, induces inflammation-induced epithelial regeneration. The polypeptide is Interleukin-6 (IL6) (Canis lupus familiaris (Dog)).